A 393-amino-acid chain; its full sequence is S-adenosylmethionine synthase (393 aa).

A Mg(2+)-binding site is contributed by E10. An ATP-binding site is contributed by H16. A K(+)-binding site is contributed by E44. L-methionine contacts are provided by E57 and Q100. Residues 168–170, 236–239, D247, 253–254, A270, K274, and K278 each bind ATP; these read DGK, SGRF, and RK. L-methionine is bound at residue D247. Residue K278 participates in L-methionine binding.

It belongs to the AdoMet synthase family. As to quaternary structure, homotetramer. The cofactor is Mn(2+). It depends on Mg(2+) as a cofactor. Co(2+) is required as a cofactor. K(+) serves as cofactor.

It localises to the cytoplasm. The enzyme catalyses L-methionine + ATP + H2O = S-adenosyl-L-methionine + phosphate + diphosphate. The protein operates within amino-acid biosynthesis; S-adenosyl-L-methionine biosynthesis; S-adenosyl-L-methionine from L-methionine: step 1/1. Functionally, catalyzes the formation of S-adenosylmethionine from methionine and ATP. The reaction comprises two steps that are both catalyzed by the same enzyme: formation of S-adenosylmethionine (AdoMet) and triphosphate, and subsequent hydrolysis of the triphosphate. The chain is S-adenosylmethionine synthase (METK) from Musa acuminata (Banana).